The following is a 465-amino-acid chain: Cerebellar degeneration-related protein 2-like (465 aa).

2 coiled-coil regions span residues 38-143 and 188-265; these read LLER…EQLR and LEQE…TYLL. The interval 282–314 is disordered; it reads APEADDPQPGRGDDLGAQDGVSSPAASPGHVVR. S308, S318, and S344 each carry phosphoserine. Positions 350–377 form a coiled coil; sequence MSILREVDEQYHALLEKYEELLSKCRQH. The interval 382–417 is disordered; it reads RHAGVQTSRPISRDSSWRDLRGGEEGQGEVKAGEKS. Positions 392–405 are enriched in basic and acidic residues; that stretch reads ISRDSSWRDLRGGE.

It belongs to the CDR2 family.

The polypeptide is Cerebellar degeneration-related protein 2-like (CDR2L) (Homo sapiens (Human)).